A 130-amino-acid polypeptide reads, in one-letter code: Small ribosomal subunit protein uS9 (130 aa).

It belongs to the universal ribosomal protein uS9 family.

The protein is Small ribosomal subunit protein uS9 of Yersinia enterocolitica serotype O:8 / biotype 1B (strain NCTC 13174 / 8081).